Here is a 163-residue protein sequence, read N- to C-terminus: Transcription elongation factor GreA (163 aa).

A coiled-coil region spans residues 49-80 (ENAEYDAARDRQSEVERRILELERILENAEII).

It belongs to the GreA/GreB family.

Functionally, necessary for efficient RNA polymerase transcription elongation past template-encoded arresting sites. The arresting sites in DNA have the property of trapping a certain fraction of elongating RNA polymerases that pass through, resulting in locked ternary complexes. Cleavage of the nascent transcript by cleavage factors such as GreA or GreB allows the resumption of elongation from the new 3'terminus. GreA releases sequences of 2 to 3 nucleotides. In Mycoplasmopsis agalactiae (strain NCTC 10123 / CIP 59.7 / PG2) (Mycoplasma agalactiae), this protein is Transcription elongation factor GreA.